A 108-amino-acid chain; its full sequence is Insulin-like peptide 17 (108 aa).

The N-terminal stretch at Met-1 to Ala-19 is a signal peptide.

This sequence belongs to the insulin family. In terms of tissue distribution, expressed in head neurons and the uterus.

Its subcellular location is the secreted. Involved in the regulation of the larval diapause. This Caenorhabditis elegans protein is Insulin-like peptide 17.